A 430-amino-acid chain; its full sequence is Enolase (430 aa).

Gln163 contacts (2R)-2-phosphoglycerate. Glu205 serves as the catalytic Proton donor. Mg(2+) is bound by residues Asp242, Glu288, and Asp315. Positions 340, 369, 370, and 391 each coordinate (2R)-2-phosphoglycerate. Residue Lys340 is the Proton acceptor of the active site.

The protein belongs to the enolase family. Mg(2+) is required as a cofactor.

It is found in the cytoplasm. The protein localises to the secreted. The protein resides in the cell surface. The enzyme catalyses (2R)-2-phosphoglycerate = phosphoenolpyruvate + H2O. Its pathway is carbohydrate degradation; glycolysis; pyruvate from D-glyceraldehyde 3-phosphate: step 4/5. Functionally, catalyzes the reversible conversion of 2-phosphoglycerate (2-PG) into phosphoenolpyruvate (PEP). It is essential for the degradation of carbohydrates via glycolysis. In Onion yellows phytoplasma (strain OY-M), this protein is Enolase.